The following is a 966-amino-acid chain: Probable transport protein MmpL11 (966 aa).

12 helical membrane passes run 13-33, 188-208, 214-234, 235-255, 279-299, 311-331, 373-393, 527-547, 557-577, 595-615, 646-666, and 668-688; these read WLVF…AMTQ, IILM…IPLA, VVIT…SVFV, TSTV…FILM, GLAV…IYLI, AILA…AVLA, ALAA…MVLG, TQPL…LISI, VLMT…VFQW, VPPL…IFLL, AALI…PLVA, and IGVA…LVLV.

The protein belongs to the resistance-nodulation-cell division (RND) (TC 2.A.6) family. MmpL subfamily.

The protein resides in the cell membrane. In Mycobacterium bovis (strain ATCC BAA-935 / AF2122/97), this protein is Probable transport protein MmpL11 (mmpL11).